A 643-amino-acid polypeptide reads, in one-letter code: Threonine--tRNA ligase (643 aa).

Residues 1–61 form the TGS domain; it reads MPIITLPDGS…SEDATLEIIT (61 aa). The interval 243–534 is catalytic; the sequence is DHRKIGKALD…ITEEYAGFFP (292 aa). Zn(2+) is bound by residues Cys334, His385, and His511.

It belongs to the class-II aminoacyl-tRNA synthetase family. In terms of assembly, homodimer. Zn(2+) is required as a cofactor.

It localises to the cytoplasm. It catalyses the reaction tRNA(Thr) + L-threonine + ATP = L-threonyl-tRNA(Thr) + AMP + diphosphate + H(+). Catalyzes the attachment of threonine to tRNA(Thr) in a two-step reaction: L-threonine is first activated by ATP to form Thr-AMP and then transferred to the acceptor end of tRNA(Thr). Also edits incorrectly charged L-seryl-tRNA(Thr). The sequence is that of Threonine--tRNA ligase from Glaesserella parasuis serovar 5 (strain SH0165) (Haemophilus parasuis).